The following is a 382-amino-acid chain: Intermediate transcription factor 3 large subunit (382 aa).

This sequence belongs to the poxviruses A23 family. In terms of assembly, heterodimer of a 45 kDa and a 32 kDa subunit.

Functionally, acts with RNA polymerase to initiate transcription from intermediate gene promoters. The sequence is that of Intermediate transcription factor 3 large subunit (VITF3L) from Monkeypox virus (strain Zaire-96-I-16) (MPX).